The sequence spans 470 residues: 3-isopropylmalate dehydratase large subunit (470 aa).

Residues 50–121 (NVARGCQHRH…PCGRPGAGRH (72 aa)) form a disordered region. Residues C349, C409, and C412 each contribute to the [4Fe-4S] cluster site.

This sequence belongs to the aconitase/IPM isomerase family. LeuC type 1 subfamily. In terms of assembly, heterodimer of LeuC and LeuD. The cofactor is [4Fe-4S] cluster.

It carries out the reaction (2R,3S)-3-isopropylmalate = (2S)-2-isopropylmalate. The protein operates within amino-acid biosynthesis; L-leucine biosynthesis; L-leucine from 3-methyl-2-oxobutanoate: step 2/4. Catalyzes the isomerization between 2-isopropylmalate and 3-isopropylmalate, via the formation of 2-isopropylmaleate. The sequence is that of 3-isopropylmalate dehydratase large subunit from Azotobacter vinelandii.